We begin with the raw amino-acid sequence, 127 residues long: Small ribosomal subunit protein uS11 (127 aa).

This sequence belongs to the universal ribosomal protein uS11 family. As to quaternary structure, part of the 30S ribosomal subunit. Interacts with proteins S7 and S18. Binds to IF-3.

Functionally, located on the platform of the 30S subunit, it bridges several disparate RNA helices of the 16S rRNA. Forms part of the Shine-Dalgarno cleft in the 70S ribosome. The chain is Small ribosomal subunit protein uS11 from Streptococcus pyogenes serotype M1.